The chain runs to 810 residues: Actin-regulating kinase PRK1 (810 aa).

Residues 22–298 (AKIIKYLTSG…CQVLEEVSRL (277 aa)) form the Protein kinase domain. ATP is bound by residues 28 to 36 (LTSGGFAQV) and lysine 56. Aspartate 158 serves as the catalytic Proton acceptor. Phosphoserine is present on residues serine 402, serine 428, and serine 484. Disordered stretches follow at residues 552 to 668 (FTGN…NVNI) and 733 to 761 (GVLD…HLRT). Phosphothreonine is present on threonine 553. The segment covering 553–566 (TGNSVNNSRSASFD) has biased composition (polar residues). Phosphoserine is present on serine 556. Residues 567-588 (NNNVNGNGNNTNRRLVSSSTSS) are compositionally biased toward low complexity. Basic and acidic residues-rich tracts occupy residues 594–612 (SDTK…EKRR) and 622–639 (FDQH…DYYR). Positions 645-658 (KKTQASAKTTSKPT) are enriched in low complexity. A compositionally biased stretch (basic and acidic residues) spans 733 to 748 (GVLDIKTKSNGKDKSR). The interval 743-756 (GKDKSRPPRPPPKP) is interaction with SH3 domain of ABP1.

It belongs to the protein kinase superfamily. Ser/Thr protein kinase family. In terms of assembly, interacts with ABP1, which is required for proper actin patch localization.

The protein localises to the cytoplasm. It is found in the cytoskeleton. Its subcellular location is the actin patch. It catalyses the reaction L-seryl-[protein] + ATP = O-phospho-L-seryl-[protein] + ADP + H(+). It carries out the reaction L-threonyl-[protein] + ATP = O-phospho-L-threonyl-[protein] + ADP + H(+). Functionally, protein kinase involved in the regulation of actin cytoskeleton organization and endocytosis. Phosphorylates PAN1 which disrupts the interaction between PAN1 and END3, and between PAN1 and SLA1. Phosphorylates SCD5. Preferentially, phosphorylates substrates on threonine residues in a [L/I/V/M]-x-x-[Q/N/T/S]-x-T-G motif. This Saccharomyces cerevisiae (strain ATCC 204508 / S288c) (Baker's yeast) protein is Actin-regulating kinase PRK1 (PRK1).